The sequence spans 1273 residues: Protein sax-3 (1273 aa).

A signal peptide spans 1–23 (MFNRKTLLCTILLVLQAVIRSFC). Ig-like C2-type domains follow at residues 31 to 127 (PVII…GSLK), 133 to 222 (EDFR…ARLS), 227 to 312 (PKFE…AHLR), 317 to 411 (PSFQ…LKVT), and 425 to 511 (PTIE…ASLT). 5 disulfides stabilise this stretch: cysteine 52-cysteine 110, cysteine 154-cysteine 205, cysteine 248-cysteine 296, cysteine 338-cysteine 393, and cysteine 446-cysteine 495. 3 Fibronectin type-III domains span residues 533–628 (SPTQ…TSKP), 653–750 (QLIK…TAEA), and 755–849 (PPED…MNQD). The chain crosses the membrane as a helical span at residues 874–894 (VPVIVIVAILIIFVVIIIAYC). The segment at 1033-1273 (APAMPTNPVP…NNGIVTQEQT (241 aa)) is disordered. Pro residues predominate over residues 1037 to 1046 (PTNPVPPEPP). The span at 1096–1105 (QLHSSDGTGS) shows a compositional bias: polar residues. Positions 1106–1115 (SKERTGERRT) are enriched in basic and acidic residues. Residues 1125–1136 (IPPPPSNPPPPG) show a composition bias toward pro residues. A compositionally biased stretch (polar residues) spans 1145–1156 (QTATRRQLNRGS). The segment covering 1207–1222 (MDDDGGSSEADGENSE) has biased composition (acidic residues). Residues 1240–1273 (SASTLAHSCYGTNGTAQRFRSIPRNNGIVTQEQT) show a composition bias toward polar residues.

The protein belongs to the immunoglobulin superfamily. ROBO/SAX3 family. Expressed in the AVG interneuron and the male-specific sensory neuron HOA.

The protein localises to the membrane. Functionally, required to confine migrating sex myoblasts to the ventral muscle quadrants during their migration through the body and for multiple aspects of sensory, motor, and interneuron axon guidance. This is Protein sax-3 from Caenorhabditis elegans.